A 290-amino-acid chain; its full sequence is ATP synthase gamma chain (290 aa).

This sequence belongs to the ATPase gamma chain family. F-type ATPases have 2 components, CF(1) - the catalytic core - and CF(0) - the membrane proton channel. CF(1) has five subunits: alpha(3), beta(3), gamma(1), delta(1), epsilon(1). CF(0) has three main subunits: a, b and c.

Its subcellular location is the cell inner membrane. Its function is as follows. Produces ATP from ADP in the presence of a proton gradient across the membrane. The gamma chain is believed to be important in regulating ATPase activity and the flow of protons through the CF(0) complex. This Desulfotalea psychrophila (strain LSv54 / DSM 12343) protein is ATP synthase gamma chain.